Here is a 320-residue protein sequence, read N- to C-terminus: Fructose-1,6-bisphosphatase class 1 (320 aa).

4 residues coordinate Mg(2+): glutamate 105, aspartate 124, leucine 126, and aspartate 127. Residues aspartate 127–serine 130, tyrosine 233, and lysine 263 each bind substrate. Position 269 (glutamate 269) interacts with Mg(2+).

The protein belongs to the FBPase class 1 family. In terms of assembly, homotetramer. It depends on Mg(2+) as a cofactor.

The protein localises to the cytoplasm. It carries out the reaction beta-D-fructose 1,6-bisphosphate + H2O = beta-D-fructose 6-phosphate + phosphate. It functions in the pathway carbohydrate biosynthesis; gluconeogenesis. In Methanocorpusculum labreanum (strain ATCC 43576 / DSM 4855 / Z), this protein is Fructose-1,6-bisphosphatase class 1.